We begin with the raw amino-acid sequence, 208 residues long: Outer-membrane lipoprotein carrier protein (208 aa).

Positions 1-22 (MKNLLCAVMLTSPLLYSTAVFA) are cleaved as a signal peptide.

It belongs to the LolA family. As to quaternary structure, monomer.

It localises to the periplasm. Functionally, participates in the translocation of lipoproteins from the inner membrane to the outer membrane. Only forms a complex with a lipoprotein if the residue after the N-terminal Cys is not an aspartate (The Asp acts as a targeting signal to indicate that the lipoprotein should stay in the inner membrane). This is Outer-membrane lipoprotein carrier protein from Shewanella sp. (strain W3-18-1).